A 364-amino-acid polypeptide reads, in one-letter code: Pre-small/secreted glycoprotein (364 aa).

Positions 1–32 (MGVTGILQLPRDRFKRTSFFLWVIILFQRTFS) are cleaved as a signal peptide. Residue Asn40 is glycosylated (N-linked (GlcNAc...) asparagine; by host). 2 cysteine pairs are disulfide-bonded: Cys108–Cys135 and Cys121–Cys147. Residues Asn204, Asn228, Asn238, Asn257, and Asn268 are each glycosylated (N-linked (GlcNAc...) asparagine; by host).

This sequence belongs to the filoviruses glycoprotein family. As to quaternary structure, homodimer; disulfide-linked. The homodimers are linked by two disulfide bonds in a parallel orientation. In terms of assembly, monomer. In terms of processing, this precursor is processed into mature sGP and delta-peptide by host furin or furin-like proteases. The cleavage site corresponds to the furin optimal cleavage sequence [KR]-X-[KR]-R. Post-translationally, N-glycosylated. O-glycosylated.

The protein resides in the secreted. Its function is as follows. Seems to possess an anti-inflammatory activity as it can reverse the barrier-decreasing effects of TNF alpha. Might therefore contribute to the lack of inflammatory reaction seen during infection in spite the of extensive necrosis and massive virus production. Does not seem to be involved in activation of primary macrophages. Does not seem to interact specifically with neutrophils. In terms of biological role, viroporin that permeabilizes mammalian cell plasma membranes. It acts by altering permeation of ionic compounds and small molecules. This activity may lead to viral enterotoxic activity. The chain is Pre-small/secreted glycoprotein (GP) from Epomops franqueti (Franquet's epauletted fruit bat).